The following is a 449-amino-acid chain: Putative glycosyltransferase 7 (449 aa).

Residues 1–32 (MVSPETSSSHYQSSPMAKYAGTRTRPVVCISD) lie on the Cytoplasmic side of the membrane. The chain crosses the membrane as a helical; Signal-anchor for type II membrane protein span at residues 33 to 53 (VVLFLGGAFMSLILVWSFFSF). Residues 54–449 (SSISPNLTVK…VPFDYPDEPW (396 aa)) lie on the Lumenal side of the membrane. N-linked (GlcNAc...) asparagine glycosylation is found at N59, N123, and N332.

It belongs to the glycosyltransferase 34 family.

It localises to the golgi apparatus membrane. Its function is as follows. Probable glycosyltransferase that may be involved in the biosynthesis of xyloglucan. The sequence is that of Putative glycosyltransferase 7 (GT7) from Arabidopsis thaliana (Mouse-ear cress).